Reading from the N-terminus, the 299-residue chain is Probable 3-hydroxyisobutyrate dehydrogenase-like 2, mitochondrial (299 aa).

Residues 14–43 (TRIG…TVYA) and Ser108 contribute to the NAD(+) site. The active site involves Lys182. An NAD(+)-binding site is contributed by Lys250.

It belongs to the HIBADH-related family. 3-hydroxyisobutyrate dehydrogenase subfamily.

It localises to the mitochondrion. The enzyme catalyses 3-hydroxy-2-methylpropanoate + NAD(+) = 2-methyl-3-oxopropanoate + NADH + H(+). The protein operates within amino-acid degradation; L-valine degradation. The sequence is that of Probable 3-hydroxyisobutyrate dehydrogenase-like 2, mitochondrial from Arabidopsis thaliana (Mouse-ear cress).